Consider the following 332-residue polypeptide: DnAJ-like protein slr0093 (332 aa).

The J domain occupies 6–75 (FKDYYQILGV…RQKYDQFGRY (70 aa)).

The protein is DnAJ-like protein slr0093 of Synechocystis sp. (strain ATCC 27184 / PCC 6803 / Kazusa).